The chain runs to 273 residues: Co-chaperone protein DjlA (273 aa).

At Met-1–Lys-6 the chain is on the periplasmic side. A helical membrane pass occupies residues Leu-7–His-31. Topologically, residues Met-32–Lys-273 are cytoplasmic. Residues Asp-207–Lys-273 enclose the J domain.

In terms of assembly, homodimer.

The protein resides in the cell inner membrane. Regulatory DnaK co-chaperone. Direct interaction between DnaK and DjlA is needed for the induction of the wcaABCDE operon, involved in the synthesis of a colanic acid polysaccharide capsule, possibly through activation of the RcsB/RcsC phosphotransfer signaling pathway. The colanic acid capsule may help the bacterium survive conditions outside the host. The polypeptide is Co-chaperone protein DjlA (Photorhabdus laumondii subsp. laumondii (strain DSM 15139 / CIP 105565 / TT01) (Photorhabdus luminescens subsp. laumondii)).